Consider the following 432-residue polypeptide: uncharacterized protein (432 aa).

A compositionally biased stretch (basic residues) spans methionine 1–lysine 18. Disordered stretches follow at residues methionine 1–asparagine 23, asparagine 37–glycine 56, and serine 122–leucine 168. Composition is skewed to low complexity over residues asparagine 37–asparagine 53, serine 122–glutamine 147, and glutamate 154–leucine 168. Residues leucine 181–isoleucine 226 adopt a coiled-coil conformation. 2 disordered regions span residues valine 270–glycine 290 and serine 310–arginine 432. A compositionally biased stretch (low complexity) spans serine 274–serine 288. The segment covering serine 311 to asparagine 324 has biased composition (polar residues). The segment covering lysine 352–threonine 378 has biased composition (low complexity). The segment covering isoleucine 383–serine 414 has biased composition (polar residues).

This is an uncharacterized protein from Dictyostelium discoideum (Social amoeba).